Here is a 703-residue protein sequence, read N- to C-terminus: tRNA 5-methylaminomethyl-2-thiouridine biosynthesis bifunctional protein MnmC (703 aa).

The segment at 1–281 (MTAKPQKSCQ…KPAALVAKDH (281 aa)) is tRNA (mnm(5)s(2)U34)-methyltransferase. The segment at 286 to 703 (VGGGLASANL…LRKLLKGKAL (418 aa)) is FAD-dependent cmnm(5)s(2)U34 oxidoreductase.

The protein in the N-terminal section; belongs to the methyltransferase superfamily. tRNA (mnm(5)s(2)U34)-methyltransferase family. This sequence in the C-terminal section; belongs to the DAO family. FAD is required as a cofactor.

It is found in the cytoplasm. It carries out the reaction 5-aminomethyl-2-thiouridine(34) in tRNA + S-adenosyl-L-methionine = 5-methylaminomethyl-2-thiouridine(34) in tRNA + S-adenosyl-L-homocysteine + H(+). Functionally, catalyzes the last two steps in the biosynthesis of 5-methylaminomethyl-2-thiouridine (mnm(5)s(2)U) at the wobble position (U34) in tRNA. Catalyzes the FAD-dependent demodification of cmnm(5)s(2)U34 to nm(5)s(2)U34, followed by the transfer of a methyl group from S-adenosyl-L-methionine to nm(5)s(2)U34, to form mnm(5)s(2)U34. The chain is tRNA 5-methylaminomethyl-2-thiouridine biosynthesis bifunctional protein MnmC from Shewanella sp. (strain MR-7).